We begin with the raw amino-acid sequence, 144 residues long: Large ribosomal subunit protein uL16 (144 aa).

Over residues 1–19 (MLLPKRVKYRRQHRPKTTG) the composition is skewed to basic residues. The segment at 1–23 (MLLPKRVKYRRQHRPKTTGRSKG) is disordered.

The protein belongs to the universal ribosomal protein uL16 family. As to quaternary structure, part of the 50S ribosomal subunit.

In terms of biological role, binds 23S rRNA and is also seen to make contacts with the A and possibly P site tRNAs. The sequence is that of Large ribosomal subunit protein uL16 from Staphylococcus saprophyticus subsp. saprophyticus (strain ATCC 15305 / DSM 20229 / NCIMB 8711 / NCTC 7292 / S-41).